The chain runs to 268 residues: 14-3-3-like protein GF14 upsilon (268 aa).

Residues Ser-69 and Ser-192 each carry the phosphoserine modification. Thr-213 bears the Phosphothreonine mark. The segment at 243–268 is disordered; sequence EAGDDIKEAPKEVQKVDEQAQPPPSQ. Residues 246-260 are compositionally biased toward basic and acidic residues; that stretch reads DDIKEAPKEVQKVDE. Ser-267 is modified (phosphoserine).

It belongs to the 14-3-3 family. In terms of assembly, interacts with EDE1. Interacts with DREB1A and DREB1B in the nucleus. Interacts with CINV1.

It is found in the cytoplasm. It localises to the nucleus. Its function is as follows. Is associated with a DNA binding complex that binds to the G box, a well-characterized cis-acting DNA regulatory element found in plant genes. May be involved in cell cycle regulation by binding to soluble EDE1 and sequestering it in an inactive form during the early stages of mitosis. This Arabidopsis thaliana (Mouse-ear cress) protein is 14-3-3-like protein GF14 upsilon (GRF5).